The sequence spans 121 residues: Spermidine export protein MdtJ (121 aa).

4 consecutive transmembrane segments (helical) span residues 1 to 21 (MYIY…GTLS), 32 to 52 (GGFI…SFAV), 55 to 75 (IALG…ITLF), and 82 to 102 (ESLS…IVLI).

This sequence belongs to the drug/metabolite transporter (DMT) superfamily. Small multidrug resistance (SMR) (TC 2.A.7.1) family. MdtJ subfamily. As to quaternary structure, forms a complex with MdtI.

The protein resides in the cell inner membrane. Functionally, catalyzes the excretion of spermidine. This chain is Spermidine export protein MdtJ, found in Escherichia coli O127:H6 (strain E2348/69 / EPEC).